The following is a 409-amino-acid chain: Serine hydroxymethyltransferase (409 aa).

Residues L116 and G120–L122 each bind (6S)-5,6,7,8-tetrahydrofolate. K225 is subject to N6-(pyridoxal phosphate)lysine.

Belongs to the SHMT family. In terms of assembly, homodimer. Requires pyridoxal 5'-phosphate as cofactor.

The protein localises to the cytoplasm. The catalysed reaction is (6R)-5,10-methylene-5,6,7,8-tetrahydrofolate + glycine + H2O = (6S)-5,6,7,8-tetrahydrofolate + L-serine. It participates in one-carbon metabolism; tetrahydrofolate interconversion. It functions in the pathway amino-acid biosynthesis; glycine biosynthesis; glycine from L-serine: step 1/1. Catalyzes the reversible interconversion of serine and glycine with tetrahydrofolate (THF) serving as the one-carbon carrier. This reaction serves as the major source of one-carbon groups required for the biosynthesis of purines, thymidylate, methionine, and other important biomolecules. Also exhibits THF-independent aldolase activity toward beta-hydroxyamino acids, producing glycine and aldehydes, via a retro-aldol mechanism. This is Serine hydroxymethyltransferase from Acholeplasma laidlawii (strain PG-8A).